The sequence spans 699 residues: Fervidolysin (699 aa).

A signal peptide spans 1–21 (MRKVLLIASIVALILALFSCA). A propeptide spanning residues 22 to 149 (NPSFEPRSKA…MYKIRKPGLN (128 aa)) is cleaved from the precursor. Glutamate 157 is a binding site for Ca(2+). The Peptidase S8 domain occupies 163-465 (LWGLEAIGVT…YGLVKLDAAL (303 aa)). The active-site Charge relay system is the aspartate 190. A Ca(2+)-binding site is contributed by aspartate 199. Histidine 228 functions as the Charge relay system in the catalytic mechanism. Ca(2+)-binding residues include lysine 239, aspartate 241, lysine 243, and isoleucine 245. The Charge relay system role is filled by serine 409.

The protein belongs to the peptidase S8 family. In terms of processing, undergoes auto-proteolytic processing. Once cleaved, the propeptide can remain associated with the protease and blocks its activity. The physiological activation of fervidolysin is proposed to be achieved through the stepwise removal of the propeptide accomplished by several proteolytic cleavages that may not be autolytic.

Its subcellular location is the cell surface. Is inhibited by phenylmethylsulfonyl fluoride and 3,4-dichloroisocoumarin. EDTA and iodoacetate (1 to 5 mM) have only little effect on the enzyme activity. Its function is as follows. Protease able to degrade keratin into peptides. Is responsible for keratinolysis by F.pennivorans, which allows this bacterium to grow on native feathers. The polypeptide is Fervidolysin (Fervidobacterium pennivorans).